Reading from the N-terminus, the 396-residue chain is Large ribosomal subunit protein uL24m (396 aa).

Residues 374-396 (QLSLGGGQEDAATTTSPEQPKVV) form a disordered region. The segment covering 384 to 396 (AATTTSPEQPKVV) has biased composition (polar residues).

The protein belongs to the universal ribosomal protein uL24 family. As to quaternary structure, component of the mitochondrial large ribosomal subunit (mt-LSU). Mature N.crassa 74S mitochondrial ribosomes consist of a small (37S) and a large (54S) subunit. The 37S small subunit contains a 16S ribosomal RNA (16S mt-rRNA) and 32 different proteins. The 54S large subunit contains a 23S rRNA (23S mt-rRNA) and 42 different proteins. uL24m forms the wall of the exit tunnel.

The protein resides in the mitochondrion. Component of the mitochondrial ribosome (mitoribosome), a dedicated translation machinery responsible for the synthesis of mitochondrial genome-encoded proteins, including at least some of the essential transmembrane subunits of the mitochondrial respiratory chain. The mitoribosomes are attached to the mitochondrial inner membrane and translation products are cotranslationally integrated into the membrane. The sequence is that of Large ribosomal subunit protein uL24m (mrpl40) from Neurospora crassa (strain ATCC 24698 / 74-OR23-1A / CBS 708.71 / DSM 1257 / FGSC 987).